Consider the following 110-residue polypeptide: Methionine-R-sulfoxide reductase B1-A (110 aa).

The 104-residue stretch at 1–104 (MSFCSFSGGE…FSSSLKFIPK (104 aa)) folds into the MsrB domain. Zn(2+)-binding residues include Cys23, Cys26, Cys69, and Cys72. The active-site Nucleophile is Sec93. Position 93 (Sec93) is a non-standard amino acid, selenocysteine.

The protein belongs to the MsrB Met sulfoxide reductase family. Zn(2+) serves as cofactor. As to expression, in the embryo, expressed in the polster, paraxial mesoderm, tectum, otic vesicle and liver.

It is found in the cytoplasm. It localises to the nucleus. The protein localises to the cytoskeleton. It carries out the reaction L-methionyl-[protein] + [thioredoxin]-disulfide + H2O = L-methionyl-(R)-S-oxide-[protein] + [thioredoxin]-dithiol. The catalysed reaction is [thioredoxin]-disulfide + L-methionine + H2O = L-methionine (R)-S-oxide + [thioredoxin]-dithiol. Functionally, methionine-sulfoxide reductase that specifically reduces methionine (R)-sulfoxide back to methionine. While in many cases, methionine oxidation is the result of random oxidation following oxidative stress, methionine oxidation is also a post-translational modification that takes place on specific residue. Acts as a regulator of actin assembly by reducing methionine (R)-sulfoxide mediated by MICALs (mical1, mical2 or mical3) on actin, thereby promoting filament repolymerization. Plays a role in innate immunity by reducing oxidized actin, leading to actin repolymerization in macrophages. This chain is Methionine-R-sulfoxide reductase B1-A (msrb1), found in Danio rerio (Zebrafish).